A 351-amino-acid chain; its full sequence is 3-dehydroquinate synthase (351 aa).

NAD(+) contacts are provided by residues 60–65 (DGEEYK), 94–98 (GVISD), 118–119 (TT), Lys-131, Lys-140, and 158–161 (FLKT). Zn(2+) is bound by residues Glu-173, His-239, and His-256.

The protein belongs to the sugar phosphate cyclases superfamily. Dehydroquinate synthase family. Requires Co(2+) as cofactor. Zn(2+) serves as cofactor. It depends on NAD(+) as a cofactor.

The protein localises to the cytoplasm. It carries out the reaction 7-phospho-2-dehydro-3-deoxy-D-arabino-heptonate = 3-dehydroquinate + phosphate. The protein operates within metabolic intermediate biosynthesis; chorismate biosynthesis; chorismate from D-erythrose 4-phosphate and phosphoenolpyruvate: step 2/7. Its function is as follows. Catalyzes the conversion of 3-deoxy-D-arabino-heptulosonate 7-phosphate (DAHP) to dehydroquinate (DHQ). The sequence is that of 3-dehydroquinate synthase from Campylobacter jejuni subsp. jejuni serotype O:6 (strain 81116 / NCTC 11828).